A 720-amino-acid polypeptide reads, in one-letter code: DNA helicase II (720 aa).

Residues 8–286 form the UvrD-like helicase ATP-binding domain; sequence DSLNDKQREA…IRLEQNYRST (279 aa). ATP-binding positions include 32 to 37 and arginine 284; that span reads GSGKTR. The 278-residue stretch at 287-564 folds into the UvrD-like helicase C-terminal domain; that stretch reads SNILSAANAL…QLMTLHSAKG (278 aa).

It belongs to the helicase family. UvrD subfamily.

The catalysed reaction is Couples ATP hydrolysis with the unwinding of duplex DNA by translocating in the 3'-5' direction.. It catalyses the reaction ATP + H2O = ADP + phosphate + H(+). In terms of biological role, a helicase with DNA-dependent ATPase activity. Unwinds DNA duplexes with 3'-5' polarity. Translocates on single-stranded DNA with 3'-5' polarity. Initiates unwinding more efficiently from a nicked substrate than double-stranded DNA. Involved in the post-incision events of nucleotide excision repair and methyl-directed mismatch repair, and probably also in repair of alkylated DNA. The polypeptide is DNA helicase II (Escherichia coli (strain K12)).